Reading from the N-terminus, the 327-residue chain is Regulatory protein MsrR (327 aa).

Basic and acidic residues predominate over residues 1-18 (MDKETNDNEYRRQSEHRT). The interval 1-24 (MDKETNDNEYRRQSEHRTSAPKRK) is disordered. Over 1–31 (MDKETNDNEYRRQSEHRTSAPKRKKKKKIRK) the chain is Cytoplasmic. The chain crosses the membrane as a helical; Signal-anchor for type II membrane protein span at residues 32-52 (LPIILLIVVILLIALVVYIVH). Over 53 to 327 (SYNSGVEYAK…QAIKDFLDED (275 aa)) the chain is Extracellular.

The protein belongs to the LytR/CpsA/Psr (LCP) family.

Its subcellular location is the cell membrane. In terms of biological role, involved in SarA attenuation. Affects resistance to oxacillin and teicoplanin, as well as the synthesis of virulence factors. The protein is Regulatory protein MsrR (msrR) of Staphylococcus aureus (strain Mu50 / ATCC 700699).